The sequence spans 148 residues: MQFNIQEIIKMIPHSYPFLLIDKVIACTPNESTIAVKNVTFNEPFFIGHFPGNPIMPGVLIVEAMAQACMICVISNDQGQNTQDYSVYFMSIELAKFRKPVIPGDTLIIEVNVTHKRNNTCKFQCHAQVENTLVAEAQILAMIKQNEA.

Residue His49 is part of the active site.

The protein belongs to the thioester dehydratase family. FabZ subfamily.

It is found in the cytoplasm. The catalysed reaction is a (3R)-hydroxyacyl-[ACP] = a (2E)-enoyl-[ACP] + H2O. Its function is as follows. Involved in unsaturated fatty acids biosynthesis. Catalyzes the dehydration of short chain beta-hydroxyacyl-ACPs and long chain saturated and unsaturated beta-hydroxyacyl-ACPs. The polypeptide is 3-hydroxyacyl-[acyl-carrier-protein] dehydratase FabZ (Ehrlichia canis (strain Jake)).